Reading from the N-terminus, the 108-residue chain is UPF0145 protein AF_0869 (108 aa).

The protein belongs to the UPF0145 family.

This Archaeoglobus fulgidus (strain ATCC 49558 / DSM 4304 / JCM 9628 / NBRC 100126 / VC-16) protein is UPF0145 protein AF_0869.